A 627-amino-acid chain; its full sequence is MDKNTVIGLVLIGLVIFGFSWLNRPDPQEIEAQRKAAIEAARQDSIAKAEAELLAARTQGATPDSIKQAAGYNQYGLLAAATAGAEEQVELANGKIALKLSTKGGAIREVLLRDYKTHDGKPLYLFREGESDFNLPLRTVDNRLVDTRDLYFSPISRTDSSVVMRLAVDSASYLDLAYVLLPDDYRLRMTVSGQNLQSLFPANMTMQDLEWSQRIRRQEKSWKFENQYTSIYYKYSGDEVDRLSDSKQEDKKTLEEPLHWVSFKDKYFASVLVCDSYFENNKLAQKTAAAGSDYLKNCTMSATFPLDVRSGTKARFTFFFGPLKYNMLRAYDKGMKAEDNLDLDHLVYLGASIFRWINRYMIIPASTFLQQYFSNWGLIILLLTLGIKLLISPLAYKGYLSSAKMRLLRPQVQEINAKYPGKDQESMMKRQSATMNLYRAAGAGPMSGCLPMLLQFPFLIAMYMYFPTTIDIRQQSFLWAEDLSSYDAVFSWTADIPLLSQFYGNHVSLFCLLMSISNILYIRYTMNQSDTGQEGMAMLKWMPYITTVMFLFFFNQNASGLCYYYFLSSIITVIQYMSSRFIINEEKLMAKLEANKTKPRKKSKWMARLEEAQRQQEAMRRQQQKRK.

6 helical membrane passes run K3–N23, W376–Y396, L450–I470, F502–I522, E534–F554, and A558–S578.

It belongs to the OXA1/ALB3/YidC family. Type 1 subfamily. In terms of assembly, interacts with the Sec translocase complex via SecD. Specifically interacts with transmembrane segments of nascent integral membrane proteins during membrane integration.

The protein localises to the cell inner membrane. In terms of biological role, required for the insertion and/or proper folding and/or complex formation of integral membrane proteins into the membrane. Involved in integration of membrane proteins that insert both dependently and independently of the Sec translocase complex, as well as at least some lipoproteins. Aids folding of multispanning membrane proteins. The polypeptide is Membrane protein insertase YidC (Porphyromonas gingivalis (strain ATCC BAA-308 / W83)).